We begin with the raw amino-acid sequence, 205 residues long: Carboxysome shell protein CsoS1D (205 aa).

BMC circularly permuted domains lie at 3 to 100 (ELRT…TREY) and 106 to 205 (VVMW…TCRS). A Gates the pore motif is present at residues 68–69 (ER).

This sequence belongs to the EutL/PduB family. As to quaternary structure, homotrimer. Forms a dimer of stacked trimers, the same faces interact. Probably forms a CsoS1-CsoS1D-CsoS2 complex.

Its subcellular location is the carboxysome. Functionally, part of the carboxysome shell, a polyhedral inclusion where RuBisCO (ribulose bisphosphate carboxylase, cbbL-cbbS) is sequestered. It may control transport of RuBisCO reactants in and out of the carboxysome. The chain is Carboxysome shell protein CsoS1D from Hydrogenovibrio crunogenus (strain DSM 25203 / XCL-2) (Thiomicrospira crunogena).